The primary structure comprises 638 residues: Threonine--tRNA ligase (638 aa).

Residues 1 to 61 (MPLITLPDGN…DKDCSVKIFT (61 aa)) form the TGS domain. The segment at 243-535 (DHRKLGKEMD…LIENYAGKFP (293 aa)) is catalytic. Residues Cys-335, His-386, and His-512 each coordinate Zn(2+).

This sequence belongs to the class-II aminoacyl-tRNA synthetase family. As to quaternary structure, homodimer. Requires Zn(2+) as cofactor.

Its subcellular location is the cytoplasm. It carries out the reaction tRNA(Thr) + L-threonine + ATP = L-threonyl-tRNA(Thr) + AMP + diphosphate + H(+). Functionally, catalyzes the attachment of threonine to tRNA(Thr) in a two-step reaction: L-threonine is first activated by ATP to form Thr-AMP and then transferred to the acceptor end of tRNA(Thr). Also edits incorrectly charged L-seryl-tRNA(Thr). The protein is Threonine--tRNA ligase of Pelagibacter ubique (strain HTCC1062).